A 482-amino-acid chain; its full sequence is C3a anaphylatoxin chemotactic receptor (482 aa).

The Extracellular portion of the chain corresponds to 1 to 23 (MASFSAETNSTDLLSQPWNEPPV). Asn-9 carries an N-linked (GlcNAc...) asparagine glycan. The helical transmembrane segment at 24–46 (ILSMVILSLTFLLGLPGNGLVLW) threads the bilayer. Residues 47–57 (VAGLKMQRTVN) are Cytoplasmic-facing. Residues 58-80 (TVWFLHLTLADLLCCLSLPFSLA) form a helical membrane-spanning segment. Topologically, residues 81 to 96 (HLALQGQWPYGRFLCE) are extracellular. The cysteines at positions 95 and 172 are disulfide-linked. A helical membrane pass occupies residues 97 to 118 (LIPSIIVLNMFASVFLLTAISL). Residues 119–139 (DRCLVVFKPIWCQNHRNVGTA) lie on the Cytoplasmic side of the membrane. The helical transmembrane segment at 140-160 (CSICGCIWVVAFVMCIPVFVY) threads the bilayer. Topologically, residues 161 to 340 (REIFTADNHN…TPLVAITITR (180 aa)) are extracellular. Tyr-174 and Tyr-184 each carry sulfotyrosine. Asn-194 is a glycosylation site (N-linked (GlcNAc...) asparagine). Tyr-318 is subject to Sulfotyrosine. The chain crosses the membrane as a helical span at residues 341 to 360 (LVVGFLLPSVIMIACYSFIV). Topologically, residues 361 to 377 (FRMQRGRFAKSQSKTFR) are cytoplasmic. The chain crosses the membrane as a helical span at residues 378–400 (VAVVVVAVFLVCWTPYHIFGVLS). The Extracellular segment spans residues 401–417 (LLIDPESPLGKTLMSWD). Residues 418-438 (HVSIALASANSCFNPFLYALL) traverse the membrane as a helical segment. The Cytoplasmic segment spans residues 439–482 (GKDFRKKARQSIQGILEAAFSEELTRSTHCNSNNVFSERNSTTV). Residue Ser-459 is modified to Phosphoserine. A Phosphothreonine modification is found at Thr-463.

It belongs to the G-protein coupled receptor 1 family. Interacts with VGF-derived peptide TLQP-21. Post-translationally, among the sulfation sites Tyr-174 is essential for binding of C3a anaphylatoxin.

The protein resides in the cell membrane. In terms of biological role, receptor for the chemotactic and inflammatory peptide anaphylatoxin C3a. This receptor stimulates chemotaxis, granule enzyme release and superoxide anion production. The protein is C3a anaphylatoxin chemotactic receptor (C3AR1) of Pongo abelii (Sumatran orangutan).